A 285-amino-acid chain; its full sequence is Energy-coupling factor transporter ATP-binding protein EcfA2 (285 aa).

The region spanning 3–245 is the ABC transporter domain; it reads INFEQVNFSY…DLVWFKTVAL (243 aa). 40-47 contributes to the ATP binding site; it reads GQTGSGKS. The active-site Proton acceptor is Glu-171.

This sequence belongs to the ABC transporter superfamily. Energy-coupling factor EcfA family. In terms of assembly, forms a stable energy-coupling factor (ECF) transporter complex probably composed of 2 membrane-embedded substrate-binding proteins (S component), 2 ATP-binding proteins (A component) and 2 transmembrane proteins (T component). This complex interacts with a number of substrate-specific components, including FolT, PanT and RibU for 5-formyltetrahydrofolate, pantothenate and riboflavin respectively.

The protein localises to the cell membrane. ATP-binding (A) component of a common energy-coupling factor (ECF) ABC-transporter complex. Unlike classic ABC transporters this ECF transporter provides the energy necessary to transport a number of different substrates including 5-formyltetrahydrofolate, pantothenate and riboflavin. Expression of the complex plus FolT in E.coli allows 5-formyltetrahydrofolate uptake; 5-formyltetrahydrofolate is not taken up in the absence of FolT or the EcfA1A2T complex. The sequence is that of Energy-coupling factor transporter ATP-binding protein EcfA2 from Leuconostoc mesenteroides subsp. mesenteroides (strain ATCC 8293 / DSM 20343 / BCRC 11652 / CCM 1803 / JCM 6124 / NCDO 523 / NBRC 100496 / NCIMB 8023 / NCTC 12954 / NRRL B-1118 / 37Y).